We begin with the raw amino-acid sequence, 116 residues long: Ribonuclease P protein component 2 (116 aa).

It belongs to the eukaryotic/archaeal RNase P protein component 2 family. In terms of assembly, consists of a catalytic RNA component and at least 4-5 protein subunits.

The protein resides in the cytoplasm. It catalyses the reaction Endonucleolytic cleavage of RNA, removing 5'-extranucleotides from tRNA precursor.. In terms of biological role, part of ribonuclease P, a protein complex that generates mature tRNA molecules by cleaving their 5'-ends. The chain is Ribonuclease P protein component 2 from Methanosarcina mazei (strain ATCC BAA-159 / DSM 3647 / Goe1 / Go1 / JCM 11833 / OCM 88) (Methanosarcina frisia).